The chain runs to 809 residues: Glycerol-3-phosphate acyltransferase (809 aa).

The HXXXXD motif signature appears at 306-311 (HRSHMD).

This sequence belongs to the GPAT/DAPAT family.

Its subcellular location is the cell inner membrane. The catalysed reaction is sn-glycerol 3-phosphate + an acyl-CoA = a 1-acyl-sn-glycero-3-phosphate + CoA. The protein operates within phospholipid metabolism; CDP-diacylglycerol biosynthesis; CDP-diacylglycerol from sn-glycerol 3-phosphate: step 1/3. The protein is Glycerol-3-phosphate acyltransferase of Vibrio vulnificus (strain YJ016).